The chain runs to 630 residues: Probable potassium transport system protein Kup (630 aa).

Transmembrane regions (helical) follow at residues 19–39 (GLIGVLGVVYGDIGTSPLYAV), 59–79 (LLSLIFWALIITVTIKYVLLI), 108–128 (WIIGIIGICGAGLFFGDATIT), 145–165 (PGLKEFVLPIAIAVILVLFFV), 173–193 (VGGAFGPIMVIWFVVIGALGL), 220–240 (LLAFIALGSVVLAVTGAEALY), 255–275 (WLFFVLPCLLLNYFGQGALVI), 284–304 (PFFFLLPHALVVPMVILATIA), 345–365 (IYVPPVNSFLFVVVVLLVLGF), 374–394 (AYGIAVTGTFLSTNALAAFVY), 405–425 (TVLVFGAIGLVDFAFFSSNVL), and 427–447 (VFDGGWVPLAIGFSLITVMTT).

Belongs to the HAK/KUP transporter (TC 2.A.72) family.

It is found in the cell inner membrane. The catalysed reaction is K(+)(in) + H(+)(in) = K(+)(out) + H(+)(out). Functionally, transport of potassium into the cell. Likely operates as a K(+):H(+) symporter. The sequence is that of Probable potassium transport system protein Kup from Acidiphilium cryptum (strain JF-5).